Consider the following 71-residue polypeptide: MKIPLILVTIAIILLMVPTESDAFDLGGLIKGVVDLFGRRSLKNRDYFDYMQDPSLSNADLRELEELLEDY.

Positions 1–23 are cleaved as a signal peptide; that stretch reads MKIPLILVTIAIILLMVPTESDA. F37 is subject to Phenylalanine amide. The propeptide occupies 41–71; the sequence is SLKNRDYFDYMQDPSLSNADLRELEELLEDY.

Belongs to the non-disulfide-bridged peptide (NDBP) superfamily. Short antimicrobial peptide (group 4) family. As to expression, expressed by the venom gland.

It localises to the secreted. Its function is as follows. Antimicrobial peptide. In Chaerilus tricostatus (Scorpion), this protein is Peptide Ctri10261.